An 87-amino-acid chain; its full sequence is Small ribosomal subunit protein eS21 (87 aa).

Methionine 1 carries the post-translational modification N-acetylmethionine.

Belongs to the eukaryotic ribosomal protein eS21 family. Component of the small ribosomal subunit (SSU). Mature yeast ribosomes consist of a small (40S) and a large (60S) subunit. The 40S small subunit contains 1 molecule of ribosomal RNA (18S rRNA) and at least 33 different proteins. The large 60S subunit contains 3 rRNA molecules (25S, 5.8S and 5S rRNA) and at least 46 different proteins. Interacts with uS2A and uS2B, strongest interaction is with uS2B.

The protein resides in the cytoplasm. The protein localises to the nucleus. In terms of biological role, component of the ribosome, a large ribonucleoprotein complex responsible for the synthesis of proteins in the cell. The small ribosomal subunit (SSU) binds messenger RNAs (mRNAs) and translates the encoded message by selecting cognate aminoacyl-transfer RNA (tRNA) molecules. The large subunit (LSU) contains the ribosomal catalytic site termed the peptidyl transferase center (PTC), which catalyzes the formation of peptide bonds, thereby polymerizing the amino acids delivered by tRNAs into a polypeptide chain. The nascent polypeptides leave the ribosome through a tunnel in the LSU and interact with protein factors that function in enzymatic processing, targeting, and the membrane insertion of nascent chains at the exit of the ribosomal tunnel. eS21 is required for the processing of the 20S rRNA-precursor to mature 18S rRNA in a late step of the maturation of 40S ribosomal subunits. Has a physiological role leading to 18S rRNA stability. This Schizosaccharomyces pombe (strain 972 / ATCC 24843) (Fission yeast) protein is Small ribosomal subunit protein eS21 (rps21).